Reading from the N-terminus, the 297-residue chain is Formylmethanofuran--tetrahydromethanopterin formyltransferase (297 aa).

It belongs to the FTR family. Homotetramer.

It is found in the cytoplasm. The enzyme catalyses N-formylmethanofuran + 5,6,7,8-tetrahydromethanopterin + H(+) = N(5)-formyl-5,6,7,8-tetrahydromethanopterin + methanofuran. The protein operates within one-carbon metabolism; methanogenesis from CO(2); 5,10-methenyl-5,6,7,8-tetrahydromethanopterin from CO(2): step 2/3. In terms of biological role, catalyzes the reversible transfer of a formyl group from formylmethanofuran (formyl-MFR) to tetrahydromethanopterin (H(4)MPT) to produce 5-formyl tetrahydromethanopterin (5-formyl-H(4)MPT) and methanofuran (MFR). The chain is Formylmethanofuran--tetrahydromethanopterin formyltransferase from Methanosarcina mazei (strain ATCC BAA-159 / DSM 3647 / Goe1 / Go1 / JCM 11833 / OCM 88) (Methanosarcina frisia).